The following is a 239-amino-acid chain: uncharacterized protein (239 aa).

This is an uncharacterized protein from Escherichia coli O157:H7.